The following is a 193-amino-acid chain: Protein GrpE (193 aa).

Positions 1 to 26 (MTKKHHKEQEEIQETIKTEAAEENVG) are disordered. Positions 7-20 (KEQEEIQETIKTEA) are enriched in basic and acidic residues.

Belongs to the GrpE family. In terms of assembly, homodimer.

It localises to the cytoplasm. Its function is as follows. Participates actively in the response to hyperosmotic and heat shock by preventing the aggregation of stress-denatured proteins, in association with DnaK and GrpE. It is the nucleotide exchange factor for DnaK and may function as a thermosensor. Unfolded proteins bind initially to DnaJ; upon interaction with the DnaJ-bound protein, DnaK hydrolyzes its bound ATP, resulting in the formation of a stable complex. GrpE releases ADP from DnaK; ATP binding to DnaK triggers the release of the substrate protein, thus completing the reaction cycle. Several rounds of ATP-dependent interactions between DnaJ, DnaK and GrpE are required for fully efficient folding. In Chlorobaculum parvum (strain DSM 263 / NCIMB 8327) (Chlorobium vibrioforme subsp. thiosulfatophilum), this protein is Protein GrpE.